We begin with the raw amino-acid sequence, 223 residues long: Alpha-S2-casein (223 aa).

A signal peptide spans Met1–Ala15. A phosphoserine mark is found at Ser23, Ser24, Ser25, Ser72, Ser73, Ser74, Ser77, Ser145, Ser147, Ser151, and Ser159. The segment at residues Ser77–Arg141 is a repeat. The stretch at residues Ser159–Leu223 is a repeat.

It belongs to the alpha-casein family. Mammary gland specific. Secreted in milk.

The protein localises to the secreted. In terms of biological role, important role in the capacity of milk to transport calcium phosphate. This chain is Alpha-S2-casein (CSN1S2), found in Capra hircus (Goat).